A 124-amino-acid chain; its full sequence is MLQNSELLQEYLPIAIFFGIATLVSSLIMILPNLLATKKYNKDKLEPYECGFEPFDDARSKFDIRFYLVAILFIIFDLEITFLVPWAISLGTIGKIGFFSMMFFLFVLTIGFVYEWKKGALDWE.

3 helical membrane passes run 11–31, 68–88, and 93–113; these read YLPI…IMIL, LVAI…PWAI, and IGKI…IGFV.

The protein belongs to the complex I subunit 3 family. NDH-1 is composed of 14 different subunits. Subunits NuoA, H, J, K, L, M, N constitute the membrane sector of the complex.

The protein resides in the cell inner membrane. The catalysed reaction is a quinone + NADH + 5 H(+)(in) = a quinol + NAD(+) + 4 H(+)(out). NDH-1 shuttles electrons from NADH, via FMN and iron-sulfur (Fe-S) centers, to quinones in the respiratory chain. The immediate electron acceptor for the enzyme in this species is believed to be ubiquinone. Couples the redox reaction to proton translocation (for every two electrons transferred, four hydrogen ions are translocated across the cytoplasmic membrane), and thus conserves the redox energy in a proton gradient. The protein is NADH-quinone oxidoreductase subunit A of Rickettsia bellii (strain RML369-C).